The following is a 371-amino-acid chain: Vasopressin V2 receptor (371 aa).

Residues 1-38 lie on the Extracellular side of the membrane; sequence MLLVSTVSAVPGLFSPPSSPSNSSQEELLDDRDPLLVR. N22 carries an N-linked (GlcNAc...) asparagine glycan. The chain crosses the membrane as a helical span at residues 39–63; that stretch reads AELALLSTIFVAVALSNGLVLGALI. Over 64-77 the chain is Cytoplasmic; that stretch reads RRGRRGRWAPMHVF. A helical membrane pass occupies residues 78–98; it reads ISHLCLADLAVALFQVLPQLA. Topologically, residues 99 to 113 are extracellular; sequence WDATDRFHGPDALCR. The chain crosses the membrane as a helical span at residues 114 to 135; that stretch reads AVKYLQMVGMYASSYMILAMTL. Over 136-159 the chain is Cytoplasmic; sequence DRHRAICRPMLAYRHGGGARWNRP. The helical transmembrane segment at 160 to 180 threads the bilayer; that stretch reads VLVAWAFSLLLSLPQLFIFAQ. Residues 181-200 are Extracellular-facing; that stretch reads RDVGNGSGVFDCWARFAEPW. Residue N185 is glycosylated (N-linked (GlcNAc...) asparagine). The helical transmembrane segment at 201-220 threads the bilayer; the sequence is GLRAYVTWIALMVFVAPALG. Over 221–271 the chain is Cytoplasmic; sequence IAACQVLIFREIHASLVPGPSERAGRRRRGRRTGSPSEGAHVSAAMAKTVR. Residues 240 to 260 are disordered; sequence PSERAGRRRRGRRTGSPSEGA. A helical membrane pass occupies residues 272–293; it reads MTLVIVIVYVLCWAPFFLVQLW. Residues 294 to 308 are Extracellular-facing; that stretch reads AAWDPEAPLERPPFV. The helical transmembrane segment at 309–328 threads the bilayer; the sequence is LLMLLASLNSCTNPWIYASF. At 329–371 the chain is on the cytoplasmic side; it reads SSSVSSELRSLLCCAQRHTTHSLGPQDESCATASSSLMKDTPS. S-palmitoyl cysteine attachment occurs at residues C341 and C342. A disordered region spans residues 349–371; that stretch reads HSLGPQDESCATASSSLMKDTPS. Positions 357–371 are enriched in polar residues; it reads SCATASSSLMKDTPS.

The protein belongs to the G-protein coupled receptor 1 family. Vasopressin/oxytocin receptor subfamily. Interacts with ARRDC4. Identified in a complex containing at least ARRDC4, V2R and HGS. Interacts with TMEM147. In terms of tissue distribution, kidney.

It is found in the cell membrane. In terms of biological role, receptor for arginine vasopressin. The activity of this receptor is mediated by G proteins which activate adenylate cyclase. Involved in renal water reabsorption. The sequence is that of Vasopressin V2 receptor (Avpr2) from Rattus norvegicus (Rat).